Reading from the N-terminus, the 280-residue chain is Thiamine-phosphate synthase (280 aa).

Residues 1–64 (MGWSGSPLTL…ATGRGGLRMT (64 aa)) are disordered. Residues 42 to 55 (GRGELRSRERRGEA) are compositionally biased toward basic and acidic residues. Residues 104–108 (QLRCK) and Asn141 contribute to the 4-amino-2-methyl-5-(diphosphooxymethyl)pyrimidine site. Mg(2+)-binding residues include Asp142 and Asp161. Ser179 is a 4-amino-2-methyl-5-(diphosphooxymethyl)pyrimidine binding site. Residue 205–207 (TPT) participates in 2-[(2R,5Z)-2-carboxy-4-methylthiazol-5(2H)-ylidene]ethyl phosphate binding. Lys208 is a binding site for 4-amino-2-methyl-5-(diphosphooxymethyl)pyrimidine. 2-[(2R,5Z)-2-carboxy-4-methylthiazol-5(2H)-ylidene]ethyl phosphate is bound at residue Gly236.

Belongs to the thiamine-phosphate synthase family. Mg(2+) serves as cofactor.

The enzyme catalyses 2-[(2R,5Z)-2-carboxy-4-methylthiazol-5(2H)-ylidene]ethyl phosphate + 4-amino-2-methyl-5-(diphosphooxymethyl)pyrimidine + 2 H(+) = thiamine phosphate + CO2 + diphosphate. It carries out the reaction 2-(2-carboxy-4-methylthiazol-5-yl)ethyl phosphate + 4-amino-2-methyl-5-(diphosphooxymethyl)pyrimidine + 2 H(+) = thiamine phosphate + CO2 + diphosphate. It catalyses the reaction 4-methyl-5-(2-phosphooxyethyl)-thiazole + 4-amino-2-methyl-5-(diphosphooxymethyl)pyrimidine + H(+) = thiamine phosphate + diphosphate. The protein operates within cofactor biosynthesis; thiamine diphosphate biosynthesis; thiamine phosphate from 4-amino-2-methyl-5-diphosphomethylpyrimidine and 4-methyl-5-(2-phosphoethyl)-thiazole: step 1/1. Its function is as follows. Condenses 4-methyl-5-(beta-hydroxyethyl)thiazole monophosphate (THZ-P) and 2-methyl-4-amino-5-hydroxymethyl pyrimidine pyrophosphate (HMP-PP) to form thiamine monophosphate (TMP). In Deinococcus radiodurans (strain ATCC 13939 / DSM 20539 / JCM 16871 / CCUG 27074 / LMG 4051 / NBRC 15346 / NCIMB 9279 / VKM B-1422 / R1), this protein is Thiamine-phosphate synthase.